The chain runs to 790 residues: Chorion peroxidase (790 aa).

Residues 1–16 form the signal peptide; the sequence is MAKKVLLLSLYSAVLS. Positions 17–209 are excised as a propeptide; that stretch reads TWFGFGYVQC…ARIPRAIRKR (193 aa). Cys210 is subject to N-acetylcysteine; in Chorion peroxidase light chain. Cys216 and Cys229 form a disulfide bridge. N-linked (Man) tryptophan glycosylation occurs at Trp259. The Proton acceptor role is filled by His305. Asn327 carries an N-linked (GlcNAc...) asparagine glycan. A 3',4'-dihydroxyphenylalanine modification is found at Tyr353. A disulfide bridge links Cys433 with Cys440. A glycan (N-linked (Man) tryptophan) is linked at Trp479. His551 lines the heme b pocket. The N-linked (Man) tryptophan glycan is linked to Trp680. Cysteines 746 and 774 form a disulfide. A glycan (N-linked (Man) tryptophan) is linked at Trp785.

The protein belongs to the peroxidase family. XPO subfamily. In terms of assembly, heterodimer. Requires heme b as cofactor. In terms of processing, N-glycosylated on Trp by mannose and on Asn by N-acetylglucosamine. There is a hexose glycosylation of an unidentified residue between 654 and 708; Trp-680 is conserved in closely related species and is probably mannosylated.

The protein localises to the secreted. The catalysed reaction is 2 a phenolic donor + H2O2 = 2 a phenolic radical donor + 2 H2O. Extremely resistant to denaturating agents, such as SDS and organic solvents. Involved in the formation of a rigid and insoluble egg chorion by catalyzing chorion protein cross-linking through dityrosine formation and phenol oxidase-catalyzed chorion melanization. The polypeptide is Chorion peroxidase (pxt) (Aedes aegypti (Yellowfever mosquito)).